Consider the following 493-residue polypeptide: MSNYFNTLNLRQKLDQLGRCRFMERSEFADGCNFLKGKKIVIVGCGAQGLNQGLNMRDSGLDISYALRPEAITEKRASFQRATENGFKVGTYQELIPTADLVVNLTPDKQHSKVVADVMPLMKQGASFGYSHGFNIVEVGEQIREDITVVMVAPKCPGTEVREEYKRGFGVPTLIAVHPANDPKGEGMAIAKAWASATGGDRAGVLESSFVAEVKSDLMGEQTILCGMLQAGSIVCYDKLVADGKDPAYAGKLIQYGWETITEALKQGGITLMMDRLSNSAKIRAFELAEEIKEHLNFLYLKHMDDIISGEFSATMMADWANGDKDLFAWREATGKTAFENAPKADGIKISEQEYFDNGVVMVAMVKAGVEMAFDAMVASGIYEESAYYESLHELPLIANTIARKRLYEMNVVISDTAEYGNYLFSNVATPILAKEIVSQLKRGDLGEPTPAAEIDNVYLRDINDTIRNHPVELIGQELRGYMTDMKRISSQG.

The KARI N-terminal Rossmann domain occupies 14-208; the sequence is LDQLGRCRFM…GGDRAGVLES (195 aa). NADP(+)-binding positions include 45 to 48, arginine 68, arginine 76, serine 78, and 108 to 110; these read CGAQ and DKQ. Histidine 132 is an active-site residue. Residue glycine 158 coordinates NADP(+). KARI C-terminal knotted domains follow at residues 209–345 and 346–486; these read SFVA…APKA and DGIK…MTDM. Mg(2+) is bound by residues aspartate 217, glutamate 221, glutamate 390, and glutamate 394. Residue serine 415 participates in substrate binding.

This sequence belongs to the ketol-acid reductoisomerase family. Requires Mg(2+) as cofactor.

The enzyme catalyses (2R)-2,3-dihydroxy-3-methylbutanoate + NADP(+) = (2S)-2-acetolactate + NADPH + H(+). It carries out the reaction (2R,3R)-2,3-dihydroxy-3-methylpentanoate + NADP(+) = (S)-2-ethyl-2-hydroxy-3-oxobutanoate + NADPH + H(+). It participates in amino-acid biosynthesis; L-isoleucine biosynthesis; L-isoleucine from 2-oxobutanoate: step 2/4. It functions in the pathway amino-acid biosynthesis; L-valine biosynthesis; L-valine from pyruvate: step 2/4. Functionally, involved in the biosynthesis of branched-chain amino acids (BCAA). Catalyzes an alkyl-migration followed by a ketol-acid reduction of (S)-2-acetolactate (S2AL) to yield (R)-2,3-dihydroxy-isovalerate. In the isomerase reaction, S2AL is rearranged via a Mg-dependent methyl migration to produce 3-hydroxy-3-methyl-2-ketobutyrate (HMKB). In the reductase reaction, this 2-ketoacid undergoes a metal-dependent reduction by NADPH to yield (R)-2,3-dihydroxy-isovalerate. This is Ketol-acid reductoisomerase (NADP(+)) from Mannheimia succiniciproducens (strain KCTC 0769BP / MBEL55E).